Consider the following 278-residue polypeptide: Tryptophan synthase alpha chain (278 aa).

Residues Glu50 and Asp61 each act as proton acceptor in the active site.

The protein belongs to the TrpA family. In terms of assembly, tetramer of two alpha and two beta chains.

The enzyme catalyses (1S,2R)-1-C-(indol-3-yl)glycerol 3-phosphate + L-serine = D-glyceraldehyde 3-phosphate + L-tryptophan + H2O. It functions in the pathway amino-acid biosynthesis; L-tryptophan biosynthesis; L-tryptophan from chorismate: step 5/5. The alpha subunit is responsible for the aldol cleavage of indoleglycerol phosphate to indole and glyceraldehyde 3-phosphate. The polypeptide is Tryptophan synthase alpha chain (Methylorubrum populi (strain ATCC BAA-705 / NCIMB 13946 / BJ001) (Methylobacterium populi)).